Here is a 220-residue protein sequence, read N- to C-terminus: UPF0319 protein YccT (220 aa).

The N-terminal stretch at 1–20 (MKTGIVTTLIALCLPVSVFA) is a signal peptide.

Belongs to the UPF0319 family.

The sequence is that of UPF0319 protein YccT from Escherichia coli (strain 55989 / EAEC).